The chain runs to 444 residues: Probable glycine dehydrogenase (decarboxylating) subunit 1 (444 aa).

The protein belongs to the GcvP family. N-terminal subunit subfamily. The glycine cleavage system is composed of four proteins: P, T, L and H. In this organism, the P 'protein' is a heterodimer of two subunits.

It catalyses the reaction N(6)-[(R)-lipoyl]-L-lysyl-[glycine-cleavage complex H protein] + glycine + H(+) = N(6)-[(R)-S(8)-aminomethyldihydrolipoyl]-L-lysyl-[glycine-cleavage complex H protein] + CO2. Its function is as follows. The glycine cleavage system catalyzes the degradation of glycine. The P protein binds the alpha-amino group of glycine through its pyridoxal phosphate cofactor; CO(2) is released and the remaining methylamine moiety is then transferred to the lipoamide cofactor of the H protein. This chain is Probable glycine dehydrogenase (decarboxylating) subunit 1, found in Chlorobaculum tepidum (strain ATCC 49652 / DSM 12025 / NBRC 103806 / TLS) (Chlorobium tepidum).